Reading from the N-terminus, the 328-residue chain is Hairy/enhancer-of-split related with YRPW motif-like protein (328 aa).

Residues 1–57 (MKRPKEPSGSDGESDGPIDVGQEGQLSQMARPLSTPSSSQMQARKKHRGIIEKRRRD) are disordered. The segment covering 24–42 (GQLSQMARPLSTPSSSQMQ) has biased composition (polar residues). The segment at 42–111 (QARKKHRGII…GGTGFFDARA (70 aa)) is transcriptional repression and interaction with NCOR1 and SIN3A. The 56-residue stretch at 43-98 (ARKKHRGIIEKRRRDRINSSLSELRRLVPTAFEKQGSSKLEKAEVLQMTVDHLKML) folds into the bHLH domain. Residues 116-153 (FRSIGFRECLTEVIRYLGVLEGPSSRADPVRIRLLSHL) form the Orange domain. The tract at residues 239–308 (SRGASSTRRA…NSSSPGPAGR (70 aa)) is disordered. Over residues 261-270 (APSSRAARSS) the composition is skewed to low complexity.

It belongs to the HEY family. As to quaternary structure, self-associates. Interacts with GATA4, GATA6, HES1, HEY1 and HEY2. Interacts with HDAC1, NCOR1 and SIN3A.

It localises to the nucleus. Functionally, downstream effector of Notch signaling which may be required for cardiovascular development. Transcriptional repressor which binds preferentially to the canonical E box sequence 5'-CACGTG-3'. Represses transcription by the cardiac transcriptional activators GATA4 and GATA6. The chain is Hairy/enhancer-of-split related with YRPW motif-like protein (HEYL) from Homo sapiens (Human).